Reading from the N-terminus, the 2430-residue chain is Protein TASOR 2 (2430 aa).

Phosphoserine occurs at positions 19, 219, and 384. Disordered regions lie at residues Leu416–Ala488 and Arg577–Ser648. Ser685 carries the phosphoserine modification. The disordered stretch occupies residues Leu704–Val727. Positions Pro710–Pro723 are enriched in basic and acidic residues. Residues Ser1025, Ser1087, and Ser1172 each carry the phosphoserine modification. The interval Leu1331–Lys1360 is disordered. Ser1541 carries the phosphoserine modification. The segment at Glu1700–Arg1727 is disordered. A compositionally biased stretch (polar residues) spans Gly1714–Leu1723. Phosphoserine is present on Ser1848. Lys2007 is covalently cross-linked (Glycyl lysine isopeptide (Lys-Gly) (interchain with G-Cter in SUMO2)). Residues Ser2009, Ser2037, Ser2062, and Ser2066 each carry the phosphoserine modification. Residues Ser2046–Trp2069 are disordered.

Belongs to the TASOR family.

The polypeptide is Protein TASOR 2 (Homo sapiens (Human)).